A 267-amino-acid chain; its full sequence is Tryptophan synthase alpha chain (267 aa).

Catalysis depends on proton acceptor residues Glu-39 and Asp-50.

It belongs to the TrpA family. In terms of assembly, tetramer of two alpha and two beta chains.

It carries out the reaction (1S,2R)-1-C-(indol-3-yl)glycerol 3-phosphate + L-serine = D-glyceraldehyde 3-phosphate + L-tryptophan + H2O. The protein operates within amino-acid biosynthesis; L-tryptophan biosynthesis; L-tryptophan from chorismate: step 5/5. Functionally, the alpha subunit is responsible for the aldol cleavage of indoleglycerol phosphate to indole and glyceraldehyde 3-phosphate. The sequence is that of Tryptophan synthase alpha chain from Helicobacter hepaticus (strain ATCC 51449 / 3B1).